A 548-amino-acid polypeptide reads, in one-letter code: Chaperonin GroEL (548 aa).

ATP contacts are provided by residues 30-33 (TLGP), lysine 51, 87-91 (DGTTT), glycine 415, and aspartate 496.

Belongs to the chaperonin (HSP60) family. As to quaternary structure, forms a cylinder of 14 subunits composed of two heptameric rings stacked back-to-back. Interacts with the co-chaperonin GroES.

It localises to the cytoplasm. The enzyme catalyses ATP + H2O + a folded polypeptide = ADP + phosphate + an unfolded polypeptide.. Its function is as follows. Together with its co-chaperonin GroES, plays an essential role in assisting protein folding. The GroEL-GroES system forms a nano-cage that allows encapsulation of the non-native substrate proteins and provides a physical environment optimized to promote and accelerate protein folding. The chain is Chaperonin GroEL from Haemophilus influenzae (strain ATCC 51907 / DSM 11121 / KW20 / Rd).